We begin with the raw amino-acid sequence, 316 residues long: HPr kinase/phosphorylase (316 aa).

Active-site residues include H146 and K167. 161-168 (GESGLGKS) serves as a coordination point for ATP. A Mg(2+)-binding site is contributed by S168. D185 functions as the Proton acceptor; for phosphorylation activity. Proton donor; for dephosphorylation activity in the catalytic mechanism. Positions 209–218 (LEVRGIGLLD) are important for the catalytic mechanism of both phosphorylation and dephosphorylation. E210 lines the Mg(2+) pocket. Residue R252 is part of the active site. The important for the catalytic mechanism of dephosphorylation stretch occupies residues 273 to 278 (QVEAGR).

Belongs to the HPrK/P family. As to quaternary structure, homohexamer. The cofactor is Mg(2+).

It carries out the reaction [HPr protein]-L-serine + ATP = [HPr protein]-O-phospho-L-serine + ADP + H(+). The enzyme catalyses [HPr protein]-O-phospho-L-serine + phosphate + H(+) = [HPr protein]-L-serine + diphosphate. Functionally, catalyzes the ATP- as well as the pyrophosphate-dependent phosphorylation of a specific serine residue in HPr, a phosphocarrier protein of the phosphoenolpyruvate-dependent sugar phosphotransferase system (PTS). HprK/P also catalyzes the pyrophosphate-producing, inorganic phosphate-dependent dephosphorylation (phosphorolysis) of seryl-phosphorylated HPr (P-Ser-HPr). This Polaromonas naphthalenivorans (strain CJ2) protein is HPr kinase/phosphorylase.